The chain runs to 405 residues: Exodeoxyribonuclease 7 large subunit (405 aa).

This sequence belongs to the XseA family. As to quaternary structure, heterooligomer composed of large and small subunits.

Its subcellular location is the cytoplasm. The enzyme catalyses Exonucleolytic cleavage in either 5'- to 3'- or 3'- to 5'-direction to yield nucleoside 5'-phosphates.. Its function is as follows. Bidirectionally degrades single-stranded DNA into large acid-insoluble oligonucleotides, which are then degraded further into small acid-soluble oligonucleotides. The chain is Exodeoxyribonuclease 7 large subunit from Halothermothrix orenii (strain H 168 / OCM 544 / DSM 9562).